A 450-amino-acid chain; its full sequence is Probable glucan endo-1,3-beta-glucosidase eglC (450 aa).

Residues 1-18 (MQFTHLVALALALATSEA) form the signal peptide. Catalysis depends on glutamate 128, which acts as the Proton donor. N-linked (GlcNAc...) asparagine glycosylation is present at asparagine 183. The active-site Nucleophile is glutamate 239. N-linked (GlcNAc...) asparagine glycosylation is found at asparagine 362 and asparagine 368. 2 stretches are compositionally biased toward low complexity: residues 377–395 (SSAI…SGSS) and 405–420 (ASGQ…SAPS). The disordered stretch occupies residues 377-420 (SSAISGSSSGSAAGSSGSSGSSGSGASGASGQSSSSTGSSSAPS). Residue asparagine 427 is the site of GPI-anchor amidated asparagine attachment. Residues 428–450 (AASGLSGSICGAVVAVCLALAAL) constitute a propeptide, removed in mature form.

Belongs to the glycosyl hydrolase 17 family. In terms of processing, the GPI-anchor is attached to the protein in the endoplasmic reticulum and serves to target the protein to the cell surface. There, the glucosamine-inositol phospholipid moiety is cleaved off and the GPI-modified mannoprotein is covalently attached via its lipidless GPI glycan remnant to the 1,6-beta-glucan of the outer cell wall layer.

It localises to the cell membrane. The protein localises to the secreted. Its subcellular location is the cell wall. It catalyses the reaction Hydrolysis of (1-&gt;3)-beta-D-glucosidic linkages in (1-&gt;3)-beta-D-glucans.. Its function is as follows. Glucanases play a role in cell expansion during growth, in cell-cell fusion during mating, and in spore release during sporulation. This enzyme may be involved in beta-glucan degradation and also function biosynthetically as a transglycosylase. The polypeptide is Probable glucan endo-1,3-beta-glucosidase eglC (eglC) (Aspergillus fumigatus (strain CBS 144.89 / FGSC A1163 / CEA10) (Neosartorya fumigata)).